The following is a 118-amino-acid chain: Immunoglobulin heavy variable 4-31 (118 aa).

The signal sequence occupies residues 1–19 (MKHLWFFLLLVAAPRWVLS). Residues 20–44 (QVQLQESGPGLVKPSQTLSLTCTVS) form a framework-1 region. An Ig-like domain is found at 20–118 (QVQLQESGPG…ADTAVYYCAR (99 aa)). A disulfide bridge connects residues C41 and C116. The complementarity-determining-1 stretch occupies residues 45 to 54 (GGSISSGGYY). The tract at residues 55–71 (WSWIRQHPGKGLEWIGY) is framework-2. The tract at residues 72 to 78 (IYYSGST) is complementarity-determining-2. The segment at 79 to 116 (YYNPSLKSLVTISVDTSKNQFSLKLSSVTAADTAVYYC) is framework-3. The segment at 117 to 118 (AR) is complementarity-determining-3.

As to quaternary structure, immunoglobulins are composed of two identical heavy chains and two identical light chains; disulfide-linked.

Its subcellular location is the secreted. It localises to the cell membrane. Functionally, v region of the variable domain of immunoglobulin heavy chains that participates in the antigen recognition. Immunoglobulins, also known as antibodies, are membrane-bound or secreted glycoproteins produced by B lymphocytes. In the recognition phase of humoral immunity, the membrane-bound immunoglobulins serve as receptors which, upon binding of a specific antigen, trigger the clonal expansion and differentiation of B lymphocytes into immunoglobulins-secreting plasma cells. Secreted immunoglobulins mediate the effector phase of humoral immunity, which results in the elimination of bound antigens. The antigen binding site is formed by the variable domain of one heavy chain, together with that of its associated light chain. Thus, each immunoglobulin has two antigen binding sites with remarkable affinity for a particular antigen. The variable domains are assembled by a process called V-(D)-J rearrangement and can then be subjected to somatic hypermutations which, after exposure to antigen and selection, allow affinity maturation for a particular antigen. The chain is Immunoglobulin heavy variable 4-31 from Homo sapiens (Human).